We begin with the raw amino-acid sequence, 29 residues long: GLWSKIKEAGKAAVKAAGKAALGAVADSV.

V29 is modified (valine amide).

In terms of tissue distribution, expressed by the skin glands.

It localises to the secreted. Its function is as follows. Has antimicrobial activity. In Phasmahyla jandaia (Jandaia leaf frog), this protein is Dermaseptin-J6.